The chain runs to 98 residues: MMKLVLFGIIVILFSMIGSIHGSDPPGNYPLNTYGNKYACTILGENDFCQKICKVHGVQYGYCFNSRCWCEYLEEKDVNIWDAVKRHCKNTILYPKGK.

An N-terminal signal peptide occupies residues 1 to 22 (MMKLVLFGIIVILFSMIGSIHG). The LCN-type CS-alpha/beta domain occupies 26–89 (PGNYPLNTYG…IWDAVKRHCK (64 aa)). Cystine bridges form between Cys40–Cys63, Cys49–Cys68, and Cys53–Cys70. Lys96 carries the lysine amide modification.

The protein belongs to the long (3 C-C) scorpion toxin superfamily. Monomer (edited version) and heterodimer (non-edited version) of this alpha chain and a beta chain (AC B8XGZ8). As to expression, expressed by the venom gland.

The protein localises to the secreted. Its function is as follows. The heterodimer non-edited LVP1 induces lipolysis in rat adipocytes. Induction of lipolysis by LVP1 appears to be mediated through the beta-2 adrenergic receptor pathway (ADRB2). Functionally, the edited BmKBTx-like, similar to beta-toxins, may modulate voltage-gated sodium channels (Nav) and may block voltage-gated potassium channels (Kv). The polypeptide is Lipolysis-activating peptide 1-alpha chain (Buthus israelis (Israeli scorpion)).